A 425-amino-acid chain; its full sequence is Interferon regulatory factor 8 (425 aa).

The IRF tryptophan pentad repeat DNA-binding region spans 7-114 (GRRLRQWLIE…EPYKVYRIVP (108 aa)).

The protein belongs to the IRF family.

It localises to the nucleus. The protein resides in the cytoplasm. Its function is as follows. Plays a role as a transcriptional activator or repressor. Specifically binds to the upstream regulatory region of type I IFN and IFN-inducible MHC class I genes (the interferon consensus sequence (ICS)). Plays a regulatory role in cells of the immune system. In Gallus gallus (Chicken), this protein is Interferon regulatory factor 8 (IRF8).